The following is a 429-amino-acid chain: Serine--tRNA ligase (429 aa).

L-serine is bound at residue 236–238; that stretch reads TGE. 267 to 269 contributes to the ATP binding site; the sequence is RSE. Residue E290 participates in L-serine binding. Residue 354-357 coordinates ATP; that stretch reads EISS. S390 contacts L-serine.

Belongs to the class-II aminoacyl-tRNA synthetase family. Type-1 seryl-tRNA synthetase subfamily. In terms of assembly, homodimer. The tRNA molecule binds across the dimer.

The protein localises to the cytoplasm. It catalyses the reaction tRNA(Ser) + L-serine + ATP = L-seryl-tRNA(Ser) + AMP + diphosphate + H(+). The catalysed reaction is tRNA(Sec) + L-serine + ATP = L-seryl-tRNA(Sec) + AMP + diphosphate + H(+). The protein operates within aminoacyl-tRNA biosynthesis; selenocysteinyl-tRNA(Sec) biosynthesis; L-seryl-tRNA(Sec) from L-serine and tRNA(Sec): step 1/1. Catalyzes the attachment of serine to tRNA(Ser). Is also able to aminoacylate tRNA(Sec) with serine, to form the misacylated tRNA L-seryl-tRNA(Sec), which will be further converted into selenocysteinyl-tRNA(Sec). The sequence is that of Serine--tRNA ligase from Vesicomyosocius okutanii subsp. Calyptogena okutanii (strain HA).